We begin with the raw amino-acid sequence, 428 residues long: Adenylosuccinate synthetase (428 aa).

GTP-binding positions include 12–18 and 40–42; these read GDEGKGK and GHS. Catalysis depends on Asp-13, which acts as the Proton acceptor. Mg(2+) is bound by residues Asp-13 and Gly-40. IMP-binding positions include 13 to 16, 38 to 41, Thr-128, Arg-142, Gln-223, Thr-238, and Arg-302; these read DEGK and NAGH. The active-site Proton donor is His-41. 298–304 provides a ligand contact to substrate; sequence VTTGRPR. GTP contacts are provided by residues Arg-304, 330–332, and 412–414; these read KLD and GTG.

This sequence belongs to the adenylosuccinate synthetase family. As to quaternary structure, homodimer. Mg(2+) is required as a cofactor.

It is found in the cytoplasm. The catalysed reaction is IMP + L-aspartate + GTP = N(6)-(1,2-dicarboxyethyl)-AMP + GDP + phosphate + 2 H(+). The protein operates within purine metabolism; AMP biosynthesis via de novo pathway; AMP from IMP: step 1/2. Its function is as follows. Plays an important role in the de novo pathway of purine nucleotide biosynthesis. Catalyzes the first committed step in the biosynthesis of AMP from IMP. This is Adenylosuccinate synthetase from Bifidobacterium longum (strain NCC 2705).